A 116-amino-acid polypeptide reads, in one-letter code: Aspartate 1-decarboxylase (116 aa).

S25 (schiff-base intermediate with substrate; via pyruvic acid) is an active-site residue. A Pyruvic acid (Ser) modification is found at S25. Residue T57 coordinates substrate. Y58 acts as the Proton donor in catalysis. 73 to 75 provides a ligand contact to substrate; the sequence is GAA.

This sequence belongs to the PanD family. Heterooctamer of four alpha and four beta subunits. Pyruvate serves as cofactor. Post-translationally, is synthesized initially as an inactive proenzyme, which is activated by self-cleavage at a specific serine bond to produce a beta-subunit with a hydroxyl group at its C-terminus and an alpha-subunit with a pyruvoyl group at its N-terminus.

Its subcellular location is the cytoplasm. It carries out the reaction L-aspartate + H(+) = beta-alanine + CO2. It participates in cofactor biosynthesis; (R)-pantothenate biosynthesis; beta-alanine from L-aspartate: step 1/1. Functionally, catalyzes the pyruvoyl-dependent decarboxylation of aspartate to produce beta-alanine. In Fervidobacterium nodosum (strain ATCC 35602 / DSM 5306 / Rt17-B1), this protein is Aspartate 1-decarboxylase.